The following is a 156-amino-acid chain: Small ribosomal subunit protein uS7 (156 aa).

This sequence belongs to the universal ribosomal protein uS7 family. As to quaternary structure, part of the 30S ribosomal subunit. Contacts proteins S9 and S11.

One of the primary rRNA binding proteins, it binds directly to 16S rRNA where it nucleates assembly of the head domain of the 30S subunit. Is located at the subunit interface close to the decoding center, probably blocks exit of the E-site tRNA. The chain is Small ribosomal subunit protein uS7 from Neisseria meningitidis serogroup C (strain 053442).